A 288-amino-acid polypeptide reads, in one-letter code: Quinate/shikimate dehydrogenase (288 aa).

Lys-71 and Asp-107 together coordinate substrate. NAD(+)-binding positions include 132-135 (AGGA), 155-158 (NRRD), Lys-205, 232-235 (CVYN), and Gly-255.

This sequence belongs to the shikimate dehydrogenase family. Homodimer.

It carries out the reaction L-quinate + NAD(+) = 3-dehydroquinate + NADH + H(+). The enzyme catalyses L-quinate + NADP(+) = 3-dehydroquinate + NADPH + H(+). The catalysed reaction is shikimate + NADP(+) = 3-dehydroshikimate + NADPH + H(+). It catalyses the reaction shikimate + NAD(+) = 3-dehydroshikimate + NADH + H(+). The protein operates within metabolic intermediate biosynthesis; chorismate biosynthesis; chorismate from D-erythrose 4-phosphate and phosphoenolpyruvate: step 4/7. The actual biological function of YdiB remains unclear, nor is it known whether 3-dehydroshikimate or quinate represents the natural substrate. Catalyzes the reversible NAD-dependent reduction of both 3-dehydroshikimate (DHSA) and 3-dehydroquinate to yield shikimate (SA) and quinate, respectively. It can use both NAD or NADP for catalysis, however it has higher catalytic efficiency with NAD. In Escherichia coli (strain 55989 / EAEC), this protein is Quinate/shikimate dehydrogenase.